Reading from the N-terminus, the 67-residue chain is DNA-directed RNA polymerase subunit omega (67 aa).

Belongs to the RNA polymerase subunit omega family. In terms of assembly, the RNAP catalytic core consists of 2 alpha, 1 beta, 1 beta' and 1 omega subunit. When a sigma factor is associated with the core the holoenzyme is formed, which can initiate transcription.

It catalyses the reaction RNA(n) + a ribonucleoside 5'-triphosphate = RNA(n+1) + diphosphate. Its function is as follows. Promotes RNA polymerase assembly. Latches the N- and C-terminal regions of the beta' subunit thereby facilitating its interaction with the beta and alpha subunits. In Dictyoglomus turgidum (strain DSM 6724 / Z-1310), this protein is DNA-directed RNA polymerase subunit omega.